The following is a 337-amino-acid chain: tRNA pseudouridine synthase D (337 aa).

Asp77 acts as the Nucleophile in catalysis. The 157-residue stretch at 152–308 folds into the TRUD domain; the sequence is GFPNYFTEQR…ARDFHWEFVE (157 aa).

This sequence belongs to the pseudouridine synthase TruD family.

The catalysed reaction is uridine(13) in tRNA = pseudouridine(13) in tRNA. Responsible for synthesis of pseudouridine from uracil-13 in transfer RNAs. This is tRNA pseudouridine synthase D from Mannheimia succiniciproducens (strain KCTC 0769BP / MBEL55E).